The chain runs to 161 residues: Nucleotide-binding protein Pcar_0033 (161 aa).

The protein belongs to the YajQ family.

Its function is as follows. Nucleotide-binding protein. The sequence is that of Nucleotide-binding protein Pcar_0033 from Syntrophotalea carbinolica (strain DSM 2380 / NBRC 103641 / GraBd1) (Pelobacter carbinolicus).